The following is a 241-amino-acid chain: Leucyl/phenylalanyl-tRNA--protein transferase (241 aa).

Belongs to the L/F-transferase family.

The protein localises to the cytoplasm. It catalyses the reaction N-terminal L-lysyl-[protein] + L-leucyl-tRNA(Leu) = N-terminal L-leucyl-L-lysyl-[protein] + tRNA(Leu) + H(+). The catalysed reaction is N-terminal L-arginyl-[protein] + L-leucyl-tRNA(Leu) = N-terminal L-leucyl-L-arginyl-[protein] + tRNA(Leu) + H(+). The enzyme catalyses L-phenylalanyl-tRNA(Phe) + an N-terminal L-alpha-aminoacyl-[protein] = an N-terminal L-phenylalanyl-L-alpha-aminoacyl-[protein] + tRNA(Phe). Its function is as follows. Functions in the N-end rule pathway of protein degradation where it conjugates Leu, Phe and, less efficiently, Met from aminoacyl-tRNAs to the N-termini of proteins containing an N-terminal arginine or lysine. The polypeptide is Leucyl/phenylalanyl-tRNA--protein transferase (Neisseria meningitidis serogroup A / serotype 4A (strain DSM 15465 / Z2491)).